Consider the following 131-residue polypeptide: Large ribosomal subunit protein bL19 (131 aa).

Belongs to the bacterial ribosomal protein bL19 family.

Its function is as follows. This protein is located at the 30S-50S ribosomal subunit interface and may play a role in the structure and function of the aminoacyl-tRNA binding site. The sequence is that of Large ribosomal subunit protein bL19 from Polynucleobacter necessarius subsp. necessarius (strain STIR1).